The chain runs to 227 residues: Cytochrome c oxidase subunit 2 (227 aa).

Residues 1–14 (MAYPFQLGLQDATS) lie on the Mitochondrial intermembrane side of the membrane. A helical membrane pass occupies residues 15-45 (PIMEELLHFHDHTLMIVFLISSLVLYIISLM). The Mitochondrial matrix portion of the chain corresponds to 46–59 (LTTKLTHTSTMDAQ). A helical transmembrane segment spans residues 60–87 (EVETVWTILPAIILILIALPSLRILYMM). The Mitochondrial intermembrane segment spans residues 88–227 (DEINNPSLTV…YFETWSALMV (140 aa)). Cu cation-binding residues include H161, C196, E198, C200, H204, and M207. Residue E198 participates in Mg(2+) binding. Y218 is modified (phosphotyrosine).

Belongs to the cytochrome c oxidase subunit 2 family. Component of the cytochrome c oxidase (complex IV, CIV), a multisubunit enzyme composed of 14 subunits. The complex is composed of a catalytic core of 3 subunits MT-CO1, MT-CO2 and MT-CO3, encoded in the mitochondrial DNA, and 11 supernumerary subunits COX4I, COX5A, COX5B, COX6A, COX6B, COX6C, COX7A, COX7B, COX7C, COX8 and NDUFA4, which are encoded in the nuclear genome. The complex exists as a monomer or a dimer and forms supercomplexes (SCs) in the inner mitochondrial membrane with NADH-ubiquinone oxidoreductase (complex I, CI) and ubiquinol-cytochrome c oxidoreductase (cytochrome b-c1 complex, complex III, CIII), resulting in different assemblies (supercomplex SCI(1)III(2)IV(1) and megacomplex MCI(2)III(2)IV(2)). Found in a complex with TMEM177, COA6, COX18, COX20, SCO1 and SCO2. Interacts with TMEM177 in a COX20-dependent manner. Interacts with COX20. Interacts with COX16. Requires Cu cation as cofactor.

It is found in the mitochondrion inner membrane. The catalysed reaction is 4 Fe(II)-[cytochrome c] + O2 + 8 H(+)(in) = 4 Fe(III)-[cytochrome c] + 2 H2O + 4 H(+)(out). Its function is as follows. Component of the cytochrome c oxidase, the last enzyme in the mitochondrial electron transport chain which drives oxidative phosphorylation. The respiratory chain contains 3 multisubunit complexes succinate dehydrogenase (complex II, CII), ubiquinol-cytochrome c oxidoreductase (cytochrome b-c1 complex, complex III, CIII) and cytochrome c oxidase (complex IV, CIV), that cooperate to transfer electrons derived from NADH and succinate to molecular oxygen, creating an electrochemical gradient over the inner membrane that drives transmembrane transport and the ATP synthase. Cytochrome c oxidase is the component of the respiratory chain that catalyzes the reduction of oxygen to water. Electrons originating from reduced cytochrome c in the intermembrane space (IMS) are transferred via the dinuclear copper A center (CU(A)) of subunit 2 and heme A of subunit 1 to the active site in subunit 1, a binuclear center (BNC) formed by heme A3 and copper B (CU(B)). The BNC reduces molecular oxygen to 2 water molecules using 4 electrons from cytochrome c in the IMS and 4 protons from the mitochondrial matrix. The chain is Cytochrome c oxidase subunit 2 (MT-CO2) from Canis adustus (Side-striped jackal).